Here is a 112-residue protein sequence, read N- to C-terminus: Photosystem II reaction center Psb28 protein (112 aa).

This sequence belongs to the Psb28 family. As to quaternary structure, part of the photosystem II complex.

It localises to the cellular thylakoid membrane. The polypeptide is Photosystem II reaction center Psb28 protein (Synechococcus elongatus (strain ATCC 33912 / PCC 7942 / FACHB-805) (Anacystis nidulans R2)).